The primary structure comprises 126 residues: DNA-directed RNA polymerase I subunit RPA12 (126 aa).

Zn(2+) contacts are provided by Cys-20, Cys-23, Cys-38, Cys-41, Cys-87, and Cys-90. A C4-type zinc finger spans residues 20 to 41; that stretch reads CSDCGSVLPLPGAQDTVTCTRC. A TFIIS-type zinc finger spans residues 83 to 123; the sequence is VDRRCPRCGHEGMAYHTRQMRSADEGQTVFYTCTNCKFQEK. The Hairpin signature appears at 106–107; that stretch reads DE. Zn(2+) contacts are provided by Cys-115 and Cys-118.

Belongs to the archaeal RpoM/eukaryotic RPA12/RPB9/RPC11 RNA polymerase family. Component of the RNA polymerase I (Pol I) complex consisting of 13 subunits: a ten-subunit catalytic core composed of POLR1A/RPA1, POLR1B/RPA2, POLR1C/RPAC1, POLR1D/RPAC2, POLR1H/RPA12, POLR2E/RPABC1, POLR2F/RPABC2, POLR2H/RPABC3, POLR2K/RPABC4 and POLR2L/RPABC5; a mobile stalk subunit POLR1F/RPA43 protruding from the core and additional subunits homologous to general transcription factors POLR1E/RPA49 and POLR1G/RPA34. Part of Pol I pre-initiation complex (PIC), in which Pol I core assembles with RRN3 and promoter-bound UTBF and SL1/TIF-IB complex.

The protein resides in the nucleus. It localises to the nucleolus. Its function is as follows. Core component of RNA polymerase I (Pol I), a DNA-dependent RNA polymerase which synthesizes ribosomal RNA precursors using the four ribonucleoside triphosphates as substrates. Can mediate Pol I proofreading of the nascent RNA transcript. Anchors into the Pol I active site to monitor transcription fidelity and cleave mis-incorporated 5'-ribonucleotides. The sequence is that of DNA-directed RNA polymerase I subunit RPA12 from Macaca mulatta (Rhesus macaque).